The chain runs to 83 residues: RNA-binding protein Hfq (83 aa).

Residues 11–71 (DTFLNHVRKN…ISTIMPGHPV (61 aa)) form the Sm domain.

The protein belongs to the Hfq family. In terms of assembly, homohexamer.

Its function is as follows. RNA chaperone that binds small regulatory RNA (sRNAs) and mRNAs to facilitate mRNA translational regulation in response to envelope stress, environmental stress and changes in metabolite concentrations. Also binds with high specificity to tRNAs. The chain is RNA-binding protein Hfq from Methylobacterium radiotolerans (strain ATCC 27329 / DSM 1819 / JCM 2831 / NBRC 15690 / NCIMB 10815 / 0-1).